The sequence spans 144 residues: Ferredoxin-thioredoxin reductase catalytic chain, chloroplastic (144 aa).

The N-terminal 31 residues, 1-31 (MTTQASTFAVAVPSVATPFRRHRNPFVVRAQ), are a transit peptide targeting the chloroplast. Cys83 serves as a coordination point for [4Fe-4S] cluster. Catalysis depends on Cys85, which acts as the Nucleophile. The cysteines at positions 85 and 115 are disulfide-linked. Residues Cys102, Cys104, and Cys113 each coordinate [4Fe-4S] cluster.

The protein belongs to the ferredoxin thioredoxin reductase beta subunit family. Heterodimer of subunit A (variable subunit) and subunit B (catalytic subunit). Heterodimeric FTR forms a complex with ferredoxin and thioredoxin. The cofactor is [4Fe-4S] cluster.

The protein resides in the plastid. It is found in the chloroplast. It carries out the reaction [thioredoxin]-disulfide + 2 reduced [2Fe-2S]-[ferredoxin] + 2 H(+) = [thioredoxin]-dithiol + 2 oxidized [2Fe-2S]-[ferredoxin]. In terms of biological role, catalytic subunit of the ferredoxin-thioredoxin reductase (FTR), which catalyzes the two-electron reduction of thioredoxins by the electrons provided by reduced ferredoxin. The chain is Ferredoxin-thioredoxin reductase catalytic chain, chloroplastic (FTRC) from Glycine max (Soybean).